The following is a 250-amino-acid chain: Sulfate transporter CysZ (250 aa).

A run of 4 helical transmembrane segments spans residues 27 to 47 (FVVL…YYLF), 64 to 84 (FLSW…LATF), 150 to 170 (FLLL…WFLF), and 210 to 230 (MLVA…PVAV).

Belongs to the CysZ family.

It is found in the cell inner membrane. Its function is as follows. High affinity, high specificity proton-dependent sulfate transporter, which mediates sulfate uptake. Provides the sulfur source for the cysteine synthesis pathway. This Vibrio cholerae serotype O1 (strain ATCC 39541 / Classical Ogawa 395 / O395) protein is Sulfate transporter CysZ.